The sequence spans 176 residues: ATP-dependent protease subunit HslV (176 aa).

The active site involves threonine 6. Residues serine 161, cysteine 164, and threonine 167 each contribute to the Na(+) site.

This sequence belongs to the peptidase T1B family. HslV subfamily. In terms of assembly, a double ring-shaped homohexamer of HslV is capped on each side by a ring-shaped HslU homohexamer. The assembly of the HslU/HslV complex is dependent on binding of ATP.

The protein localises to the cytoplasm. It catalyses the reaction ATP-dependent cleavage of peptide bonds with broad specificity.. With respect to regulation, allosterically activated by HslU binding. In terms of biological role, protease subunit of a proteasome-like degradation complex believed to be a general protein degrading machinery. The protein is ATP-dependent protease subunit HslV of Thermosipho melanesiensis (strain DSM 12029 / CIP 104789 / BI429).